We begin with the raw amino-acid sequence, 718 residues long: MLTRQSRLLRRIPPPNAVLQSGLQRRHRSTDRYSNNIHTSSTQNAPAPVYDAPIREKGMTIEAKERVRAHARKIQSSASTAAASPAVRPQPAQHFQAAPQPMPANTPRFESDGQVKNGLDYSFIGLSGGQIFQEMMLRHDVKQVFGYPGGAILPVFDAIYNSPHFDFVLPRHEQGAGHMAEGYARVSGKPGVVLVTSGPGATNVITPMQDALSDGVPMVVFCGQVATNLIGSDAFQEADVVGISRSCTKWNVMVKDIAELPRRINEAFKIATTGRPGPVLVDLPKDVTAAILRTPIPAKSAQPGHSPYLPSNPLNPSSQPSDPLPGDADLITEAAQMINKAKRPIIFAGNGVLSSPEGPKLLKELSDKGRIPVTTTLQGLGAFDERDEKSLHMIGMHGSAYANFAMQEADVLIALGVRFDDRVTGKVDTFAPAAKAAAAEGRGGIIHFEIQPKNINKIVEAQIPVLGDVVASLAELVPQIEAVDRSAWIGRCKATKERYPFTYTPSQEGQKLKPQEVVQELDRQAEALGKEKFIISTGVGQHQMWACQYYRWTEPRSWVSSGGLGTMGFGLPSAIGAKVAAPEKYVIDIDGDASFSMTAMELATASQYDIGVKVLLFNNEFQGMVEQWQDLFYENRYSHTRMTNPDFVKLSESMGTKGLRCTKLEDLPRMMKEFLEYDGKRPIVLECLVSSEHVYPMIPAGKALHEQLLHPLLRNGSE.

2 disordered regions span residues 1–50 and 72–101; these read MLTR…APVY and RKIQ…APQP. A compositionally biased stretch (polar residues) spans 32–45; that stretch reads RYSNNIHTSSTQNA. Residues 76 to 99 are compositionally biased toward low complexity; it reads SSASTAAASPAVRPQPAQHFQAAP. Position 173 (Glu173) interacts with thiamine diphosphate. Arg275 contacts FAD. Residues 296–327 are disordered; that stretch reads IPAKSAQPGHSPYLPSNPLNPSSQPSDPLPGD. The segment covering 306-325 has biased composition (low complexity); that stretch reads SPYLPSNPLNPSSQPSDPLP. FAD-binding positions include 397–418 and 449–468; these read HGSA…LGVR and EIQP…VLGD. A thiamine pyrophosphate binding region spans residues 541–621; the sequence is QHQMWACQYY…VKVLLFNNEF (81 aa). Positions 592 and 619 each coordinate Mg(2+).

Belongs to the TPP enzyme family. It depends on Mg(2+) as a cofactor. Thiamine diphosphate serves as cofactor.

Its subcellular location is the mitochondrion. The catalysed reaction is 2 pyruvate + H(+) = (2S)-2-acetolactate + CO2. It participates in amino-acid biosynthesis; L-isoleucine biosynthesis; L-isoleucine from 2-oxobutanoate: step 1/4. Its pathway is amino-acid biosynthesis; L-valine biosynthesis; L-valine from pyruvate: step 1/4. This chain is Acetolactate synthase, mitochondrial (ILV2), found in Cryptococcus neoformans var. neoformans serotype D (strain JEC21 / ATCC MYA-565) (Filobasidiella neoformans).